Reading from the N-terminus, the 236-residue chain is 2-C-methyl-D-erythritol 4-phosphate cytidylyltransferase (236 aa).

The protein belongs to the IspD/TarI cytidylyltransferase family. IspD subfamily. Homodimer.

It catalyses the reaction 2-C-methyl-D-erythritol 4-phosphate + CTP + H(+) = 4-CDP-2-C-methyl-D-erythritol + diphosphate. It participates in isoprenoid biosynthesis; isopentenyl diphosphate biosynthesis via DXP pathway; isopentenyl diphosphate from 1-deoxy-D-xylulose 5-phosphate: step 2/6. Catalyzes the formation of 4-diphosphocytidyl-2-C-methyl-D-erythritol from CTP and 2-C-methyl-D-erythritol 4-phosphate (MEP). This Escherichia coli O157:H7 protein is 2-C-methyl-D-erythritol 4-phosphate cytidylyltransferase.